Here is a 288-residue protein sequence, read N- to C-terminus: MSELRLMAVHAHPDDESSKGAATTARYAAEGARVMVVTLTGGERGDILNPAMDLPEVHGRIAEVRRDEMAKAAEILGVEHHWLGFVDSGLPEGDPLPPLPDGCFALVPLEEPVKRLVRVIREFRPHVMTTYDENGGYPHPDHIRCHQVSVAAYEAAADHLLYPDAGEPWAVQKLYYNHGFLRQRMQLLQEEFAKNGQEGPFAKWLEHWDPDNDVFANRVTTRVHCAEYFHQRDDALRAHATQIDPKGDFFHAPIEWQQRLWPTEEFELARARVPVTLPEDDLFKGVEP.

Zn(2+) is bound by residues histidine 12, aspartate 15, and histidine 142.

It belongs to the MshB deacetylase family. Mca subfamily. As to quaternary structure, monomer. Zn(2+) is required as a cofactor.

The enzyme catalyses mycothiol S-conjugate + H2O = an N-acetyl-L-cysteine-S-conjugate + 1D-myo-inositol 2-amino-2-deoxy-alpha-D-glucopyranoside. Partially inhibited by MSH when MSmB (a bimane derivative of MSH) is used as substrate. Its function is as follows. A mycothiol (MSH, N-acetyl-cysteinyl-glucosaminyl-inositol) S-conjugate amidase, it recycles conjugated MSH to the N-acetyl cysteine conjugate and the MSH precursor. Involved in MSH-dependent detoxification of a number of alkylating agents and antibiotics. Activity is specific for the mycothiol moiety. In Mycolicibacterium smegmatis (strain ATCC 700084 / mc(2)155) (Mycobacterium smegmatis), this protein is Mycothiol S-conjugate amidase.